Consider the following 139-residue polypeptide: D-ribose pyranase (139 aa).

The Proton donor role is filled by His-20. Residues Asp-28, His-106, and 128–130 (YAN) contribute to the substrate site.

The protein belongs to the RbsD / FucU family. RbsD subfamily. In terms of assembly, homodecamer.

The protein localises to the cytoplasm. The catalysed reaction is beta-D-ribopyranose = beta-D-ribofuranose. It participates in carbohydrate metabolism; D-ribose degradation; D-ribose 5-phosphate from beta-D-ribopyranose: step 1/2. Catalyzes the interconversion of beta-pyran and beta-furan forms of D-ribose. The sequence is that of D-ribose pyranase from Citrobacter koseri (strain ATCC BAA-895 / CDC 4225-83 / SGSC4696).